The primary structure comprises 188 residues: Grand meiotic recombination cluster protein 2 (188 aa).

Polar residues-rich tracts occupy residues 1–13 (MSDT…QSSE) and 21–31 (ERTNSLKSPDV). The interval 1–31 (MSDTTEVPRQSSENDQDNNLERTNSLKSPDV) is disordered.

Probable transcriptional activator involved in meiotic prophase and synaptonemal complex (SC) assembly. The protein is Grand meiotic recombination cluster protein 2 (GMC2) of Saccharomyces cerevisiae (strain ATCC 204508 / S288c) (Baker's yeast).